Here is a 514-residue protein sequence, read N- to C-terminus: ATP synthase subunit alpha (514 aa).

170–177 (GDRQIGKT) lines the ATP pocket.

The protein belongs to the ATPase alpha/beta chains family. In terms of assembly, F-type ATPases have 2 components, CF(1) - the catalytic core - and CF(0) - the membrane proton channel. CF(1) has five subunits: alpha(3), beta(3), gamma(1), delta(1), epsilon(1). CF(0) has three main subunits: a(1), b(2) and c(9-12). The alpha and beta chains form an alternating ring which encloses part of the gamma chain. CF(1) is attached to CF(0) by a central stalk formed by the gamma and epsilon chains, while a peripheral stalk is formed by the delta and b chains.

It localises to the cell inner membrane. The catalysed reaction is ATP + H2O + 4 H(+)(in) = ADP + phosphate + 5 H(+)(out). Its function is as follows. Produces ATP from ADP in the presence of a proton gradient across the membrane. The alpha chain is a regulatory subunit. This is ATP synthase subunit alpha from Ectopseudomonas mendocina (strain ymp) (Pseudomonas mendocina).